The primary structure comprises 315 residues: Eukaryotic translation initiation factor 2 subunit 1 (315 aa).

The S1 motif domain maps to 17-88; the sequence is EDVVMVNVRS…EKGYIDLSKR (72 aa). Ser-49 is modified (phosphoserine; by HRI). The residue at position 52 (Ser-52) is a Phosphoserine. Lys-141 is subject to N6-acetyllysine. The residue at position 158 (Ser-158) is a Phosphoserine. Phosphothreonine is present on residues Thr-279 and Thr-281. A disordered region spans residues 293–315; sequence LERENAEVDGDDDAEEMEAKAED. A compositionally biased stretch (acidic residues) spans 299–308; it reads EVDGDDDAEE.

It belongs to the eIF-2-alpha family. Eukaryotic translation initiation factor 2 eIF2 is a heterotrimeric complex composed of an alpha (EIF2S1), a beta (EIF2S2) and a gamma (EIF2S3) chain. eIF2 is member of the 43S pre-initiation complex (43S PIC). eIF2 forms a complex with at least CELF1/CUGBP1, CALR, CALR3, EIF2S1, EIF2S2, HSP90B1 and HSPA5. Interaction with METAP2 protects EIF2S1 from inhibitory phosphorylation. Interacts with ABCF1. Associates with ribosomes. Interacts with DDX3X in an RNA-independent manner. Post-translationally, phosphorylation at Ser-49 and Ser-52 stabilizes the eIF-2/GDP/eIF2B complex and prevents GDP/GTP exchange reaction, thus impairing the recycling of eIF-2 between successive rounds of initiation and leading to global inhibition of translation, while concomitantly initiating the preferential translation of integrated stress response (ISR)-specific mRNAs. Substrate for at least 4 kinases: EIF2AK1/HRI, EIF2AK2/PKR, EIF2AK3/PERK and EIF2AK4/GCN2. Phosphorylation on Ser-52 by the EIF2AK4/GCN2 protein kinase occurs in response to amino acid starvation and UV irradiation. Phosphorylation at Ser-52 by the EIF2AK3/PERK protein kinase occurs in response to the unfolded protein response. Phosphorylation at Ser-52 by EIF2AK1/HRI in response to mitochondrial damage promotes relocalization to the mitochondrial surface.

The protein localises to the cytoplasm. The protein resides in the stress granule. It is found in the cytosol. Its subcellular location is the mitochondrion. With respect to regulation, activity is regulated by phosphorylation at Ser-49 and Ser-52, which stabilizes the eIF2/GDP/eIF2B complex and prevents the eIF2B-mediated exchange of GDP for GTP, thereby preventing the formation of the 43S pre-initiation complex (43S PIC). This results in the global attenuation of 5' cap-dependent protein synthesis and concomitant translation of ISR-specific mRNAs that contain a short upstream open reading frame (uORF) in their 5' UTR, such as ATF4, ATF5, DDIT3/CHOP and PPP1R15A/GADD34. Member of the eIF2 complex that functions in the early steps of protein synthesis by forming a ternary complex with GTP and initiator tRNA. This complex binds to a 40S ribosomal subunit, followed by mRNA binding to form a 43S pre-initiation complex. Junction of the 60S ribosomal subunit to form the 80S initiation complex is preceded by hydrolysis of the GTP bound to eIF2 and release of an eIF2-GDP binary complex. In order for eIF2 to recycle and catalyze another round of initiation, the GDP bound to eIF2 must exchange with GTP by way of a reaction catalyzed by eIF2B. EIF2S1/eIF2-alpha is a key component of the integrated stress response (ISR), required for adaptation to various stress: phosphorylation by metabolic-stress sensing protein kinases (EIF2AK1/HRI, EIF2AK2/PKR, EIF2AK3/PERK and EIF2AK4/GCN2) in response to stress converts EIF2S1/eIF2-alpha in a global protein synthesis inhibitor, leading to a attenuation of cap-dependent translation, while concomitantly initiating the preferential translation of ISR-specific mRNAs, such as the transcriptional activators ATF4 and QRICH1, and hence allowing ATF4- and QRICH1-mediated reprogramming. EIF2S1/eIF2-alpha also acts as an activator of mitophagy in response to mitochondrial damage: phosphorylation by EIF2AK1/HRI promotes relocalization to the mitochondrial surface, thereby triggering PRKN-independent mitophagy. The chain is Eukaryotic translation initiation factor 2 subunit 1 (EIF2S1) from Pongo abelii (Sumatran orangutan).